We begin with the raw amino-acid sequence, 593 residues long: Isocitrate dehydrogenase kinase/phosphatase (593 aa).

Residues 324–330 and Lys345 contribute to the ATP site; that span reads APGIRGL. The active site involves Asp380.

It belongs to the AceK family.

The protein resides in the cytoplasm. The enzyme catalyses L-seryl-[isocitrate dehydrogenase] + ATP = O-phospho-L-seryl-[isocitrate dehydrogenase] + ADP + H(+). Functionally, bifunctional enzyme which can phosphorylate or dephosphorylate isocitrate dehydrogenase (IDH) on a specific serine residue. This is a regulatory mechanism which enables bacteria to bypass the Krebs cycle via the glyoxylate shunt in response to the source of carbon. When bacteria are grown on glucose, IDH is fully active and unphosphorylated, but when grown on acetate or ethanol, the activity of IDH declines drastically concomitant with its phosphorylation. In Dechloromonas aromatica (strain RCB), this protein is Isocitrate dehydrogenase kinase/phosphatase.